Here is a 153-residue protein sequence, read N- to C-terminus: Ribonuclease H (153 aa).

An RNase H type-1 domain is found at 1 to 142 (MRKKIEIFTD…CDELARIAAE (142 aa)). Residues Asp-10, Glu-48, Asp-70, and Asp-134 each coordinate Mg(2+).

It belongs to the RNase H family. Monomer. Requires Mg(2+) as cofactor.

The protein resides in the cytoplasm. The enzyme catalyses Endonucleolytic cleavage to 5'-phosphomonoester.. Endonuclease that specifically degrades the RNA of RNA-DNA hybrids. This Baumannia cicadellinicola subsp. Homalodisca coagulata protein is Ribonuclease H.